The sequence spans 111 residues: Large ribosomal subunit protein uL24 (111 aa).

Belongs to the universal ribosomal protein uL24 family. As to quaternary structure, part of the 50S ribosomal subunit.

Functionally, one of two assembly initiator proteins, it binds directly to the 5'-end of the 23S rRNA, where it nucleates assembly of the 50S subunit. Its function is as follows. One of the proteins that surrounds the polypeptide exit tunnel on the outside of the subunit. The polypeptide is Large ribosomal subunit protein uL24 (Cytophaga hutchinsonii (strain ATCC 33406 / DSM 1761 / CIP 103989 / NBRC 15051 / NCIMB 9469 / D465)).